The chain runs to 695 residues: ATP-dependent zinc metalloprotease FtsH (695 aa).

Residues 1–15 (MNNNKQPKQGNFVKN) lie on the Cytoplasmic side of the membrane. A helical membrane pass occupies residues 16–36 (ILMWVILAIVVVVGFNFFFSS). Topologically, residues 37–139 (NQSSVDKISY…QASSSGMWVQ (103 aa)) are extracellular. The helical transmembrane segment at 140 to 160 (ILSYIIPMLLFVGIFWLMMGG) threads the bilayer. The Cytoplasmic portion of the chain corresponds to 161 to 695 (MGARGGGGGG…KEKSEDETAE (535 aa)). 233–240 (GPPGTGKT) is a binding site for ATP. Residue H456 participates in Zn(2+) binding. E457 is a catalytic residue. Zn(2+) is bound by residues H460 and D532. The interval 657-695 (KDANANVDDFSNINIYNGDEKTDSKPEENKEKSEDETAE) is disordered. A compositionally biased stretch (basic and acidic residues) spans 674-695 (GDEKTDSKPEENKEKSEDETAE).

The protein in the central section; belongs to the AAA ATPase family. It in the C-terminal section; belongs to the peptidase M41 family. As to quaternary structure, homohexamer. It depends on Zn(2+) as a cofactor.

Its subcellular location is the cell membrane. In terms of biological role, acts as a processive, ATP-dependent zinc metallopeptidase for both cytoplasmic and membrane proteins. Plays a role in the quality control of integral membrane proteins. In Lactococcus lactis subsp. lactis (strain IL1403) (Streptococcus lactis), this protein is ATP-dependent zinc metalloprotease FtsH.